Consider the following 347-residue polypeptide: MTEFFMGLGLSYEWAWGISTIAGILLIALPLMLGVAMIIYADRKIWAAMALRRGPNVVGPLGLLQSFADGLKVFLQETIIPTAANKGLFLIAPIITFTVALMAWAVIPFNSGAVLANINVGLLYVLAISSLGVYGVVIAGWSSNSKYPFFSAMRASAQMISYEVSIGFILICVVLWAGTFNLNDIVKAQQSHVWIINGFVANPLLFPMWVMFLISGMAETARAPFDLTEAESELVAGYQTEYSSMAFALYWLGEYANVLLMCALNAVLFWGGYLPPLDIPVLYLVPGFVWLLLKILFFFFIFSWVKATVPRYRYDQLMRLGWKVFLPVSLLFVFLVSGYLMATGHFA.

Transmembrane regions (helical) follow at residues 21-41 (IAGI…IIYA), 87-107 (GLFL…WAVI), 120-140 (VGLL…VIAG), 160-180 (ISYE…AGTF), 194-214 (WIIN…MFLI), 259-279 (LLMC…PLDI), 282-302 (LYLV…FFIF), and 324-344 (VFLP…MATG).

This sequence belongs to the complex I subunit 1 family. NDH-1 is composed of 14 different subunits. Subunits NuoA, H, J, K, L, M, N constitute the membrane sector of the complex.

Its subcellular location is the cell inner membrane. It carries out the reaction a quinone + NADH + 5 H(+)(in) = a quinol + NAD(+) + 4 H(+)(out). In terms of biological role, NDH-1 shuttles electrons from NADH, via FMN and iron-sulfur (Fe-S) centers, to quinones in the respiratory chain. The immediate electron acceptor for the enzyme in this species is believed to be ubiquinone. Couples the redox reaction to proton translocation (for every two electrons transferred, four hydrogen ions are translocated across the cytoplasmic membrane), and thus conserves the redox energy in a proton gradient. This subunit may bind ubiquinone. The protein is NADH-quinone oxidoreductase subunit H of Novosphingobium aromaticivorans (strain ATCC 700278 / DSM 12444 / CCUG 56034 / CIP 105152 / NBRC 16084 / F199).